The chain runs to 40 residues: Photosystem II reaction center protein J (40 aa).

The chain crosses the membrane as a helical span at residues 8-28 (IPLCLIGTVAGIAVIGLVGVF).

Belongs to the PsbJ family. As to quaternary structure, PSII is composed of 1 copy each of membrane proteins PsbA, PsbB, PsbC, PsbD, PsbE, PsbF, PsbH, PsbI, PsbJ, PsbK, PsbL, PsbM, PsbT, PsbX, PsbY, PsbZ, Psb30/Ycf12, at least 3 peripheral proteins of the oxygen-evolving complex and a large number of cofactors. It forms dimeric complexes.

The protein resides in the plastid. It is found in the chloroplast thylakoid membrane. Its function is as follows. One of the components of the core complex of photosystem II (PSII). PSII is a light-driven water:plastoquinone oxidoreductase that uses light energy to abstract electrons from H(2)O, generating O(2) and a proton gradient subsequently used for ATP formation. It consists of a core antenna complex that captures photons, and an electron transfer chain that converts photonic excitation into a charge separation. This is Photosystem II reaction center protein J from Triticum aestivum (Wheat).